We begin with the raw amino-acid sequence, 217 residues long: MARKGILGTKLGMTQVFDENNKVVPVTVVKAGPNVVTRIRTPERDGYSAVQIAYGEISPRKVNKPVTGQFAAAGVNPRRHLAELRLDDESAAADYEVGQELTAEVFSDGAYVDVTGTSKGKGFAGTMKRHGFKGQGAAHGAQAVHRRPGSIGGCATPGRVFKGTRMSGRMGSDRVTTQNLVVHKVDAANGVLLIKGAIPGRNGGLVMVRSAIKRGEK.

This sequence belongs to the universal ribosomal protein uL3 family. Part of the 50S ribosomal subunit. Forms a cluster with proteins L14 and L19.

Its function is as follows. One of the primary rRNA binding proteins, it binds directly near the 3'-end of the 23S rRNA, where it nucleates assembly of the 50S subunit. This chain is Large ribosomal subunit protein uL3, found in Mycobacterium sp. (strain KMS).